Reading from the N-terminus, the 510-residue chain is MKLAYWMYAGPAHIGTLRVASSFKNVHAIMHAPLGDDYFNVMRSMLERERDFTPVTASIVDRHVLARGSQEKVIENITRKDKEENPDLIILTPTCTSSILQEDLQNFVNRAGLDSKSDVILADVNHYRVNELQAADRTLEQIIRFYLEKARSQSNEPLRKTEKPSANILGIFTLGFHNQHDCRELKRLLTDLGIVINQILPEGGSVTNINELPKAWFNLIPYREVGLMAANYLKNEYDMPYVAVTPMGLLDTENCIREIVDIVKSSDTSYNFDFETYIDTQTRFISQAAWFSRSIDCQNLTGKKAVVFGDATHAASITKILAREMGIRVSCSGTYCKHDADWFREQVDGFCDEVLITDDHTQVADMIARIEPAAIFGTQMERHIGKRLDIPCGVISAPVHIQNFPLGFRPFLGYEGTNQISDLVYNSFTLGMEDHLLEIFGGHDTKEVITKSLSTDSDLAWAPEALTELQRIPGFVRGKIKRNTEKFAREKNCNLITLEIMFAAKEAVGA.

Position 36 (D36) interacts with [4Fe-4S] cluster. D296 functions as the Proton donor in the catalytic mechanism. A substrate-binding site is contributed by 431–432 (GM).

Belongs to the ChlB/BchB/BchZ family. As to quaternary structure, protochlorophyllide reductase is composed of three subunits; ChlL, ChlN and ChlB. Forms a heterotetramer of two ChlB and two ChlN subunits. Requires [4Fe-4S] cluster as cofactor.

The protein resides in the plastid. The protein localises to the chloroplast. The enzyme catalyses chlorophyllide a + oxidized 2[4Fe-4S]-[ferredoxin] + 2 ADP + 2 phosphate = protochlorophyllide a + reduced 2[4Fe-4S]-[ferredoxin] + 2 ATP + 2 H2O. Its pathway is porphyrin-containing compound metabolism; chlorophyll biosynthesis (light-independent). In terms of biological role, component of the dark-operative protochlorophyllide reductase (DPOR) that uses Mg-ATP and reduced ferredoxin to reduce ring D of protochlorophyllide (Pchlide) to form chlorophyllide a (Chlide). This reaction is light-independent. The NB-protein (ChlN-ChlB) is the catalytic component of the complex. The polypeptide is Light-independent protochlorophyllide reductase subunit B (Auxenochlorella protothecoides (Green microalga)).